Here is a 938-residue protein sequence, read N- to C-terminus: Isoleucine--tRNA ligase (938 aa).

Positions 65–75 (PYANGSIHIGH) match the 'HIGH' region motif. Glutamate 568 provides a ligand contact to L-isoleucyl-5'-AMP. The short motif at 609–613 (KMSKS) is the 'KMSKS' region element. Residue lysine 612 participates in ATP binding. Zn(2+) contacts are provided by cysteine 905, cysteine 908, cysteine 921, and cysteine 924.

Belongs to the class-I aminoacyl-tRNA synthetase family. IleS type 1 subfamily. In terms of assembly, monomer. It depends on Zn(2+) as a cofactor.

Its subcellular location is the cytoplasm. The enzyme catalyses tRNA(Ile) + L-isoleucine + ATP = L-isoleucyl-tRNA(Ile) + AMP + diphosphate. Its function is as follows. Catalyzes the attachment of isoleucine to tRNA(Ile). As IleRS can inadvertently accommodate and process structurally similar amino acids such as valine, to avoid such errors it has two additional distinct tRNA(Ile)-dependent editing activities. One activity is designated as 'pretransfer' editing and involves the hydrolysis of activated Val-AMP. The other activity is designated 'posttransfer' editing and involves deacylation of mischarged Val-tRNA(Ile). The chain is Isoleucine--tRNA ligase from Mannheimia succiniciproducens (strain KCTC 0769BP / MBEL55E).